The following is a 75-amino-acid chain: uncharacterized protein (75 aa).

Residues 1–75 (MIKIYSTPTC…KAEIDKLIEK (75 aa)) enclose the Glutaredoxin domain. Cys10 and Cys13 form a disulfide bridge.

This sequence belongs to the glutaredoxin family.

This is an uncharacterized protein from Clostridium pasteurianum.